The following is a 413-amino-acid chain: Putative F-box protein At3g23970 (413 aa).

Positions 1 to 42 (MNIPPELTFEVLVRLPLKSLARFRSVRKEWKLVIDSEFFRDC) constitute an F-box domain.

The protein is Putative F-box protein At3g23970 of Arabidopsis thaliana (Mouse-ear cress).